The chain runs to 125 residues: Class III hydrophobin G (125 aa).

The first 20 residues, 1-20 (MKPSIVTFLMLAAVTAAVSA), serve as a signal peptide directing secretion. 4 disulfide bridges follow: Cys54-Cys107, Cys60-Cys101, Cys61-Cys94, and Cys108-Cys122.

This sequence belongs to the fungal hydrophobin family. Self-assembles to form functional amyloid fibrils called rodlets. Self-assembly into fibrillar rodlets occurs spontaneously at hydrophobic:hydrophilic interfaces and the rodlets further associate laterally to form amphipathic monolayers.

The protein resides in the secreted. Its subcellular location is the cell wall. Functionally, aerial growth, conidiation, and dispersal of filamentous fungi in the environment rely upon a capability of their secreting small amphipathic proteins called hydrophobins (HPBs) with low sequence identity. Class I can self-assemble into an outermost layer of rodlet bundles on aerial cell surfaces, conferring cellular hydrophobicity that supports fungal growth, development and dispersal; whereas Class II form highly ordered films at water-air interfaces through intermolecular interactions but contribute nothing to the rodlet structure. RodF and rodG belong to Class III, which contains hydrophobins with intermediate (between classes I and II) or atypical characteristics. RodG, unlike rodA, is not required for rodlet formation. This Aspergillus fumigatus (strain ATCC MYA-4609 / CBS 101355 / FGSC A1100 / Af293) (Neosartorya fumigata) protein is Class III hydrophobin G.